We begin with the raw amino-acid sequence, 220 residues long: 7-carboxy-7-deazaguanine synthase (220 aa).

Substrate is bound by residues 16–18 (IQG) and arginine 31. The 194-residue stretch at 22–215 (FAGWPCAFVR…LQLHKYIWNP (194 aa)) folds into the Radical SAM core domain. Residues cysteine 35, cysteine 39, and cysteine 42 each contribute to the [4Fe-4S] cluster site. Threonine 44 contacts Mg(2+). Position 74 (threonine 74) interacts with substrate. Glycine 76 provides a ligand contact to S-adenosyl-L-methionine.

It belongs to the radical SAM superfamily. 7-carboxy-7-deazaguanine synthase family. As to quaternary structure, homodimer. Requires [4Fe-4S] cluster as cofactor. The cofactor is S-adenosyl-L-methionine. Mg(2+) is required as a cofactor.

The enzyme catalyses 6-carboxy-5,6,7,8-tetrahydropterin + H(+) = 7-carboxy-7-deazaguanine + NH4(+). The protein operates within purine metabolism; 7-cyano-7-deazaguanine biosynthesis. In terms of biological role, catalyzes the complex heterocyclic radical-mediated conversion of 6-carboxy-5,6,7,8-tetrahydropterin (CPH4) to 7-carboxy-7-deazaguanine (CDG), a step common to the biosynthetic pathways of all 7-deazapurine-containing compounds. This Chlorobaculum tepidum (strain ATCC 49652 / DSM 12025 / NBRC 103806 / TLS) (Chlorobium tepidum) protein is 7-carboxy-7-deazaguanine synthase.